Reading from the N-terminus, the 325-residue chain is Foldase protein PrsA (325 aa).

Residues 1 to 20 (MKLMNKIIVPVTASALLLGA) form the signal peptide. Cys-21 carries the N-palmitoyl cysteine lipid modification. A lipid anchor (S-diacylglycerol cysteine) is attached at Cys-21. Residues 139 to 245 (ENSKKASHIL…YGYHIIKADK (107 aa)) enclose the PpiC domain. 2 disordered regions span residues 159 to 202 (EGLS…KKDG) and 303 to 325 (PDKIKQQQQQQSQGGSGLTNSGS).

Belongs to the PrsA family.

The protein resides in the cell membrane. The enzyme catalyses [protein]-peptidylproline (omega=180) = [protein]-peptidylproline (omega=0). Plays a major role in protein secretion by helping the post-translocational extracellular folding of several secreted proteins. This chain is Foldase protein PrsA, found in Staphylococcus epidermidis (strain ATCC 12228 / FDA PCI 1200).